Here is a 452-residue protein sequence, read N- to C-terminus: Rhodopsin (452 aa).

Over 1–33 (MGRDIPDNETWWYNPYMDIHPHWKQFDQVPAAV) the chain is Extracellular. Asparagine 8 carries N-linked (GlcNAc...) asparagine glycosylation. The chain crosses the membrane as a helical span at residues 34-58 (YYSLGIFIAICGIIGCVGNGVVIYL). Residues 59 to 70 (FTKTKSLQTPAN) lie on the Cytoplasmic side of the membrane. Residues 71–97 (MFIINLAFSDFTFSLVNGFPLMTISCF) form a helical membrane-spanning segment. The Extracellular portion of the chain corresponds to 98 to 109 (MKYWVFGNAACK). Cysteine 108 and cysteine 186 are oxidised to a cystine. A helical transmembrane segment spans residues 110-131 (VYGLIGGIFGLMSIMTMTMISI). The 'Ionic lock' involved in activated form stabilization signature appears at 132–134 (DRY). At 132 to 151 (DRYNVIGRPMSASKKMSHRK) the chain is on the cytoplasmic side. Residues 152 to 172 (AFIMIIFVWIWSTIWAIGPIF) form a helical membrane-spanning segment. Residues 173 to 199 (GWGAYTLEGVLCNCSFDYITRDTTTRS) lie on the Extracellular side of the membrane. The chain crosses the membrane as a helical span at residues 200 to 224 (NILCMYIFAFMCPIVVIFFCYFNIV). Over 225–261 (MSVSNHEKEMAAMAKRLNAKELRKAQAGANAEMKLAK) the chain is Cytoplasmic. Residues 262–283 (ISIVIVTQFLLSWSPYAVVALL) form a helical membrane-spanning segment. The Extracellular segment spans residues 284-293 (AQFGPIEWVT). Residues 294–315 (PYAAQLPVMFAKASAIHNPMIY) traverse the membrane as a helical segment. Lysine 305 is subject to N6-(retinylidene)lysine. The Cytoplasmic segment spans residues 316-452 (SVSHPKFRER…QGVDNQAYQA (137 aa)). 2 S-palmitoyl cysteine lipidation sites follow: cysteine 336 and cysteine 337. Disordered regions lie at residues 346–365 (DDKD…GETA) and 376–452 (MMQK…AYQA). Low complexity predominate over residues 376-388 (MMQKMQAQQQQQP). The span at 389-440 (AYPPQGYPPQGYPPPPPQGYPPQGYPPQGYPPQGYPPPPQGPPPQGPPPQAA) shows a compositional bias: pro residues.

This sequence belongs to the G-protein coupled receptor 1 family. Opsin subfamily. Contains one covalently linked retinal chromophore. Upon light absorption, the covalently bound 11-cis-retinal is converted to all-trans-retinal. After hydrolysis of the Schiff base and release of the covalently bound all-trans-retinal, active rhodopsin is regenerated by binding of a fresh molecule of 11-cis-retinal.

The protein localises to the cell projection. It is found in the rhabdomere membrane. In terms of biological role, photoreceptor required for image-forming vision at low light intensity. Light-induced isomerization of 11-cis to all-trans retinal triggers a conformational change that activates signaling via G-proteins. Signaling mediates the activation of phospholipase C. Subsequent receptor phosphorylation mediates displacement of the bound G-protein alpha subunit by arrestin and terminates signaling. In Loligo forbesii (Veined squid), this protein is Rhodopsin (RHO).